A 93-amino-acid chain; its full sequence is Protein IDA-LIKE 4 (93 aa).

The first 35 residues, 1 to 35, serve as a signal peptide directing secretion; it reads MYPTRPHYWRRRLSINRPQAFLLLILCLFFIHHCD.

In terms of tissue distribution, expressed in mainly in buds. Lower levels in roots. Detected at the base of pedicel, in the floral and funicule abscission zones, in vascular tissues, in guard cells of young seedlings and in hydathodes.

It localises to the secreted. Its subcellular location is the extracellular space. Its function is as follows. May be involved in floral abscission. This Arabidopsis thaliana (Mouse-ear cress) protein is Protein IDA-LIKE 4 (IDL4).